Here is a 107-residue protein sequence, read N- to C-terminus: Colipase (107 aa).

Residues 1–17 (MEKVLVLLLVALSVAYA) form the signal peptide. Positions 18–22 (APGPR) are cleaved as a propeptide — enterostatin, activation peptide. 5 disulfide bridges follow: Cys-34/Cys-45, Cys-40/Cys-56, Cys-44/Cys-78, Cys-66/Cys-86, and Cys-80/Cys-104.

It belongs to the colipase family. Forms a 1:1 stoichiometric complex with pancreatic lipase. Expressed by the pancreas.

The protein localises to the secreted. In terms of biological role, colipase is a cofactor of pancreatic lipase. It allows the lipase to anchor itself to the lipid-water interface. Without colipase the enzyme is washed off by bile salts, which have an inhibitory effect on the lipase. Its function is as follows. Enterostatin has a biological activity as a satiety signal. The sequence is that of Colipase (CLPS) from Oryctolagus cuniculus (Rabbit).